The following is a 635-amino-acid chain: MANDALSAIFSNPSRKGVQPSTSIVSYTNNEDDIIDVENGKFNKNKNINTNVYVDNSSIEESEVVPLPETKSIWSKIYYDFIVLDKTTLNVSLKESFLYNRDLKPVEEERRCWSWFNYLYFWLADCFNINTWQIAGTGLQLGLNWWQCWLTVWIGYTFAGIFVVLNSRFGSAYHLSFPITVRASFGIFFSMWPIINRVVMAIVWYAVQAWLGATPVALMLKSIFGKNLEDRIPNHFGSPNSTTFEFMCFFIFWVVSIPFVLVAPHKIRHLFTVKAALIPFAAFGFLIWALKKSHGKIELGTLNDYSPHGSEFSWIFVRSLMACVANFAALIINAPDFGRFAKNPQASLWPQLVAIPLFFAITCLIGIIVTAAGYHLYGVNYWSPLDVLGQFLETTYTRGTRAGVFLISFVFALAQLGTNISANSLACGADMTALFPRYINIRRGSLFCVAMALCICPWNLMASSSKFTSALGAYAIFLSSIAGVICADYFVVRRGYVKLTHLFLAQKGSFYMFGNKFGANWRAFVAYICGIAPNLPGFIGDVGAPKITVSEGAMRLYYLGYPVGFFISAVIYLILCYFFPVPGTPVTNFLTEKGWFQRWAYVEDFEQDWKNELRRDDLCDDTVSIYDGTEEKIVY.

At 1 to 144 the chain is on the cytoplasmic side; sequence MANDALSAIF…AGTGLQLGLN (144 aa). Residues 145-165 traverse the membrane as a helical segment; sequence WWQCWLTVWIGYTFAGIFVVL. Residues 166–174 are Extracellular-facing; the sequence is NSRFGSAYH. Residues 175–195 form a helical membrane-spanning segment; that stretch reads LSFPITVRASFGIFFSMWPII. Residues 196 to 198 are Cytoplasmic-facing; it reads NRV. The chain crosses the membrane as a helical span at residues 199–219; it reads VMAIVWYAVQAWLGATPVALM. Residues 220–243 are Extracellular-facing; sequence LKSIFGKNLEDRIPNHFGSPNSTT. The helical transmembrane segment at 244–264 threads the bilayer; sequence FEFMCFFIFWVVSIPFVLVAP. At 265-269 the chain is on the cytoplasmic side; that stretch reads HKIRH. A helical membrane pass occupies residues 270 to 290; that stretch reads LFTVKAALIPFAAFGFLIWAL. Over 291 to 311 the chain is Extracellular; it reads KKSHGKIELGTLNDYSPHGSE. A helical transmembrane segment spans residues 312-332; it reads FSWIFVRSLMACVANFAALII. At 333–351 the chain is on the cytoplasmic side; the sequence is NAPDFGRFAKNPQASLWPQ. A helical transmembrane segment spans residues 352–372; that stretch reads LVAIPLFFAITCLIGIIVTAA. At 373–401 the chain is on the extracellular side; sequence GYHLYGVNYWSPLDVLGQFLETTYTRGTR. Residues 402–422 form a helical membrane-spanning segment; sequence AGVFLISFVFALAQLGTNISA. At 423–443 the chain is on the cytoplasmic side; the sequence is NSLACGADMTALFPRYINIRR. The helical transmembrane segment at 444–464 threads the bilayer; it reads GSLFCVAMALCICPWNLMASS. Residues 465–466 lie on the Extracellular side of the membrane; the sequence is SK. The chain crosses the membrane as a helical span at residues 467–487; sequence FTSALGAYAIFLSSIAGVICA. Residues 488–522 lie on the Cytoplasmic side of the membrane; the sequence is DYFVVRRGYVKLTHLFLAQKGSFYMFGNKFGANWR. Residues 523–543 traverse the membrane as a helical segment; sequence AFVAYICGIAPNLPGFIGDVG. Over 544–560 the chain is Extracellular; it reads APKITVSEGAMRLYYLG. A helical transmembrane segment spans residues 561–581; that stretch reads YPVGFFISAVIYLILCYFFPV. The Cytoplasmic portion of the chain corresponds to 582–635; that stretch reads PGTPVTNFLTEKGWFQRWAYVEDFEQDWKNELRRDDLCDDTVSIYDGTEEKIVY.

This sequence belongs to the purine-cytosine permease (2.A.39) family.

Its subcellular location is the membrane. Its function is as follows. Transport of allantoin. This Saccharomyces cerevisiae (strain ATCC 204508 / S288c) (Baker's yeast) protein is Allantoin permease (DAL4).